A 153-amino-acid chain; its full sequence is UPF0756 membrane protein Pjdr2_2290 (153 aa).

5 helical membrane passes run Leu-6–Ala-26, Leu-50–Val-70, Leu-75–Ala-95, Met-111–Val-131, and Gly-132–Gly-152.

Belongs to the UPF0756 family.

The protein resides in the cell membrane. This chain is UPF0756 membrane protein Pjdr2_2290, found in Paenibacillus sp. (strain JDR-2).